Here is a 274-residue protein sequence, read N- to C-terminus: Dehydration-responsive element-binding protein 2A (274 aa).

Basic and acidic residues-rich tracts occupy residues 1–10 (MERGEGRRGD) and 35–50 (KWWK…ENSS). Residues 1 to 75 (MERGEGRRGD…KGGPENSNCA (75 aa)) form a disordered region. The AP2/ERF DNA-binding region spans 75–132 (AYRGVRQRTWGKWVAEIREPNRGRRLWLGSFPTALEAAHAYDEAARAMYGPTARVNFA).

The protein belongs to the AP2/ERF transcription factor family. ERF subfamily.

It localises to the nucleus. Transcriptional activator that binds specifically to the DNA sequence 5'-[AG]CCGAC-3'. Binding to the C-repeat/DRE element mediates high salinity- and dehydration-inducible transcription. This is Dehydration-responsive element-binding protein 2A (DREB2A) from Oryza sativa subsp. indica (Rice).